A 383-amino-acid polypeptide reads, in one-letter code: Protein delta homolog 2 (383 aa).

Positions 1 to 26 are cleaved as a signal peptide; the sequence is MPSGCRCLHLVCLLCILGAPGQPVRA. EGF-like domains are found at residues 27 to 58, 62 to 89, 91 to 129, and 131 to 172; these read DDCS…LHCE, RMPG…KFCD, DEHI…RDCE, and KAGP…ARCE. Over 27 to 306 the chain is Extracellular; the sequence is DDCSSHCDLA…RQEAGLGEPS (280 aa). 17 disulfide bridges follow: cysteine 29–cysteine 40, cysteine 33–cysteine 46, cysteine 48–cysteine 57, cysteine 66–cysteine 71, cysteine 79–cysteine 88, cysteine 95–cysteine 107, cysteine 101–cysteine 117, cysteine 119–cysteine 128, cysteine 135–cysteine 148, cysteine 142–cysteine 160, cysteine 162–cysteine 171, cysteine 178–cysteine 189, cysteine 183–cysteine 198, cysteine 200–cysteine 209, cysteine 216–cysteine 227, cysteine 221–cysteine 236, and cysteine 238–cysteine 247. A glycan (N-linked (GlcNAc...) asparagine) is linked at asparagine 157. The 37-residue stretch at 174 to 210 folds into the EGF-like 5; calcium-binding domain; it reads NVDDCLMRPCANGATCLDGINRFSCLCPEGFAGRFCT. In terms of domain architecture, EGF-like 6; calcium-binding spans 212-248; it reads NLDDCASRPCQRGARCRDRVHDFDCLCPSGYGGKTCE. Residues 307 to 327 form a helical membrane-spanning segment; the sequence is LVALVVFGALTAALVLATVLL. At 328-383 the chain is on the cytoplasmic side; that stretch reads TLRAWRRGVCPPGPCCYPAPHYAPACQDQECQVSMLPAGLPLPRDLPPEPGKTTAL.

Its subcellular location is the membrane. Regulates adipogenesis. In Homo sapiens (Human), this protein is Protein delta homolog 2 (DLK2).